The sequence spans 975 residues: Glycine dehydrogenase (decarboxylating) (975 aa).

Lys-723 bears the N6-(pyridoxal phosphate)lysine mark.

The protein belongs to the GcvP family. As to quaternary structure, the glycine cleavage system is composed of four proteins: P, T, L and H. Pyridoxal 5'-phosphate is required as a cofactor.

The catalysed reaction is N(6)-[(R)-lipoyl]-L-lysyl-[glycine-cleavage complex H protein] + glycine + H(+) = N(6)-[(R)-S(8)-aminomethyldihydrolipoyl]-L-lysyl-[glycine-cleavage complex H protein] + CO2. The glycine cleavage system catalyzes the degradation of glycine. The P protein binds the alpha-amino group of glycine through its pyridoxal phosphate cofactor; CO(2) is released and the remaining methylamine moiety is then transferred to the lipoamide cofactor of the H protein. The protein is Glycine dehydrogenase (decarboxylating) of Burkholderia vietnamiensis (strain G4 / LMG 22486) (Burkholderia cepacia (strain R1808)).